The chain runs to 161 residues: Phosphopantetheine adenylyltransferase (161 aa).

S8 is a binding site for substrate. ATP contacts are provided by residues 8–9 (SF) and H16. Positions 40, 72, and 86 each coordinate substrate. ATP is bound by residues 87 to 89 (GLR), E97, and 122 to 128 (FSFVSSS).

It belongs to the bacterial CoaD family. In terms of assembly, homohexamer. The cofactor is Mg(2+).

The protein localises to the cytoplasm. The catalysed reaction is (R)-4'-phosphopantetheine + ATP + H(+) = 3'-dephospho-CoA + diphosphate. It participates in cofactor biosynthesis; coenzyme A biosynthesis; CoA from (R)-pantothenate: step 4/5. Its function is as follows. Reversibly transfers an adenylyl group from ATP to 4'-phosphopantetheine, yielding dephospho-CoA (dPCoA) and pyrophosphate. The sequence is that of Phosphopantetheine adenylyltransferase from Thermotoga neapolitana (strain ATCC 49049 / DSM 4359 / NBRC 107923 / NS-E).